The chain runs to 366 residues: Stage V sporulation protein E (366 aa).

Transmembrane regions (helical) follow at residues 10 to 30 (LLLV…VYSA), 50 to 70 (LLFA…DYWT), 77 to 97 (LLMV…VGMV), 105 to 125 (IGVG…MIAF), 144 to 164 (FVPA…QPDL), 185 to 205 (IAHF…LVLS), 227 to 247 (GFQI…GMGL), 264 to 284 (FIFA…ILLL), 306 to 326 (FVAV…IGVV), and 337 to 357 (LPFL…VGVL).

This sequence belongs to the SEDS family. SpoVE subfamily.

It is found in the cell membrane. Its function is as follows. May play an essential role not only during sporulation, but also during vegetative growth. This chain is Stage V sporulation protein E (spoVE), found in Bacillus subtilis (strain 168).